The sequence spans 463 residues: tRNA modification GTPase MnmE (463 aa).

The (6S)-5-formyl-5,6,7,8-tetrahydrofolate site is built by Arg-29, Glu-91, and Arg-130. Residues 225 to 384 (GLKVAIVGRP…LETAILEIVQ (160 aa)) enclose the TrmE-type G domain. Asn-235 serves as a coordination point for K(+). GTP contacts are provided by residues 235–240 (NVGKSS), 254–260 (TDLPGTT), and 279–282 (DTAG). Ser-239 lines the Mg(2+) pocket. Residues Thr-254, Leu-256, and Thr-259 each contribute to the K(+) site. A Mg(2+)-binding site is contributed by Thr-260. Lys-463 is a (6S)-5-formyl-5,6,7,8-tetrahydrofolate binding site.

It belongs to the TRAFAC class TrmE-Era-EngA-EngB-Septin-like GTPase superfamily. TrmE GTPase family. In terms of assembly, homodimer. Heterotetramer of two MnmE and two MnmG subunits. K(+) is required as a cofactor.

It localises to the cytoplasm. Its function is as follows. Exhibits a very high intrinsic GTPase hydrolysis rate. Involved in the addition of a carboxymethylaminomethyl (cmnm) group at the wobble position (U34) of certain tRNAs, forming tRNA-cmnm(5)s(2)U34. In Trichormus variabilis (strain ATCC 29413 / PCC 7937) (Anabaena variabilis), this protein is tRNA modification GTPase MnmE.